The primary structure comprises 328 residues: Octanoyltransferase, mitochondrial (328 aa).

In terms of domain architecture, BPL/LPL catalytic spans 108-312; that stretch reads MKPNPIILTF…EMTKLLGIKT (205 aa). Substrate-binding positions include 162-169, 241-243, and 254-256; these read RGGQVTFH, SVG, and GVA. Cys272 (acyl-thioester intermediate) is an active-site residue.

The protein belongs to the LipB family.

The protein localises to the mitochondrion. It carries out the reaction octanoyl-[ACP] + L-lysyl-[protein] = N(6)-octanoyl-L-lysyl-[protein] + holo-[ACP] + H(+). The protein operates within protein modification; protein lipoylation via endogenous pathway; protein N(6)-(lipoyl)lysine from octanoyl-[acyl-carrier-protein]: step 1/2. Its function is as follows. Catalyzes the transfer of endogenously produced octanoic acid from octanoyl-acyl-carrier-protein onto the lipoyl domains of lipoate-dependent enzymes. Lipoyl-ACP can also act as a substrate although octanoyl-ACP is likely to be the physiological substrate. The chain is Octanoyltransferase, mitochondrial (LIP2) from Saccharomyces cerevisiae (strain ATCC 204508 / S288c) (Baker's yeast).